The sequence spans 245 residues: Thiopurine S-methyltransferase (245 aa).

Ser-14 is modified (phosphoserine). 29-40 (WQDKWVNGKTAF) provides a ligand contact to S-adenosyl-L-methionine. Residue Phe-40 coordinates substrate. Lys-58 bears the N6-acetyllysine mark. Residues Leu-69, Glu-90, 134–135 (SI), and Arg-152 each bind S-adenosyl-L-methionine.

It belongs to the class I-like SAM-binding methyltransferase superfamily. TPMT family. In terms of assembly, monomer.

It is found in the cytoplasm. The catalysed reaction is S-adenosyl-L-methionine + a thiopurine = S-adenosyl-L-homocysteine + a thiopurine S-methylether.. It catalyses the reaction mercaptopurine + S-adenosyl-L-methionine = 6-methylthiopurine + S-adenosyl-L-homocysteine + H(+). It carries out the reaction 6-thioguanine + S-adenosyl-L-methionine = 6-methylthioguanine + S-adenosyl-L-homocysteine + H(+). With respect to regulation, inhibited by S-adenosyl-L-homocysteine (SAH). Functionally, catalyzes the S-methylation of thiopurine drugs such as 6-mercaptopurine (also called mercaptopurine, 6-MP or its brand name Purinethol) and 6-thioguanine (also called tioguanine or 6-TG) using S-adenosyl-L-methionine as the methyl donor. TPMT activity modulates the cytotoxic effects of thiopurine prodrugs. A natural substrate for this enzyme has yet to be identified. The chain is Thiopurine S-methyltransferase (TPMT) from Homo sapiens (Human).